The sequence spans 185 residues: Thiol:disulfide interchange protein DsbE (185 aa).

Residues 1-4 (MKRN) are Cytoplasmic-facing. A helical transmembrane segment spans residues 5 to 25 (VLLLPLLIFLLIAAALLWQLA). At 26–185 (RNAQGDDPTN…WDRYSREAAQ (160 aa)) the chain is on the periplasmic side. A Thioredoxin domain is found at 39–177 (ALTGKPVPAF…WESELKPLWD (139 aa)). Cysteine 80 and cysteine 83 are disulfide-bonded.

The protein belongs to the thioredoxin family. DsbE subfamily.

The protein resides in the cell inner membrane. Functionally, involved in disulfide bond formation. Catalyzes a late, reductive step in the assembly of periplasmic c-type cytochromes, probably the reduction of disulfide bonds of the apocytochrome c to allow covalent linkage with the heme. Possible subunit of a heme lyase. The protein is Thiol:disulfide interchange protein DsbE (dsbE1) of Salmonella typhi.